A 247-amino-acid chain; its full sequence is MKFIIAPAKKMIRAQDDFPVQSQPKFRVQAGELLLLMQQLTFSEAQALWHTSDKLTQTAYNQLQQSDLTRQQSPAIFSYSGIQYQYMAPDLLDDAGLVYIQQHLRILSGLYGILRPFDGVVPYRLEMQNHLPLPHHRNLYDFWGNRLYQALARMPGPIINLASDEYAKAIRPYLQAKDQFIDVRFAHRVNGQLKTRATYAKMARGEMIRFAASHRLTKAADLKNFDSPTYRFNAHLSTATQLVFIAK.

It belongs to the UPF0246 family.

The protein is UPF0246 protein LCABL_22600 of Lacticaseibacillus casei (strain BL23) (Lactobacillus casei).